The sequence spans 916 residues: Protein translocase subunit SecA (916 aa).

ATP is bound by residues Gln88, 106–110, and Asp519; that span reads GEGKT. Zn(2+) contacts are provided by Cys902, Cys904, Cys913, and Cys914.

It belongs to the SecA family. As to quaternary structure, monomer and homodimer. Part of the essential Sec protein translocation apparatus which comprises SecA, SecYEG and auxiliary proteins SecDF. Other proteins may also be involved. It depends on Zn(2+) as a cofactor.

The protein resides in the cell inner membrane. It localises to the cytoplasm. It catalyses the reaction ATP + H2O + cellular proteinSide 1 = ADP + phosphate + cellular proteinSide 2.. In terms of biological role, part of the Sec protein translocase complex. Interacts with the SecYEG preprotein conducting channel. Has a central role in coupling the hydrolysis of ATP to the transfer of proteins into and across the cell membrane, serving as an ATP-driven molecular motor driving the stepwise translocation of polypeptide chains across the membrane. In Treponema pallidum (strain Nichols), this protein is Protein translocase subunit SecA.